The chain runs to 441 residues: Zinc finger and BTB domain-containing protein 8A (441 aa).

Positions 24 to 92 constitute a BTB domain; that stretch reads CDCSILVEGK…VYSGKLSLTG (69 aa). Positions 135–248 are disordered; the sequence is LSDKDTGSNG…HVSQSEEQVQ (114 aa). Residues Ser161 and Ser167 each carry the phosphoserine modification. Glycyl lysine isopeptide (Lys-Gly) (interchain with G-Cter in SUMO2) cross-links involve residues Lys178, Lys182, and Lys199. Composition is skewed to basic and acidic residues over residues 198–208 and 227–242; these read AKHEQRKDPIK and GKGD…HVSQ. 2 C2H2-type zinc fingers span residues 282–304 and 310–333; these read FKCP…LRCH and YPCQ…RTIH. Residue Lys437 forms a Glycyl lysine isopeptide (Lys-Gly) (interchain with G-Cter in SUMO2) linkage.

Its subcellular location is the nucleus. Its function is as follows. May be involved in transcriptional regulation. This is Zinc finger and BTB domain-containing protein 8A (Zbtb8a) from Rattus norvegicus (Rat).